The primary structure comprises 629 residues: MFASRFDPSQLTAPAASAPEGIVGTTPPAIVPLKRQATESDNEEYGSHQDSDESSNSSSEEDEDRMQVDYGASEEDSSEVEEEESKPSTHSTVLSRFKQTVSLQERLGASDIAESKEDEGIEDEAASTHQLKQIPQPEFVKNPMNLNTNSLQFKSTGWLNTEKIYYDNSLIKPFSDYANELEAKLLQNICKNFSTNTFPIQSIILDSILPVLNFTLNVSKRNFTRRIGDILVNAATGSGKTLAYSIPIVQTLFKRQINRLRCIIIVPTKLLINQVYTTLTKLTQGTSLIVSIAKLENSLKDEHKKLSNLEPDILITTPGRLVDHLNMKSINLKNLKFLIIDEADRLLNQSFQGWCPKLMSHLKTDKLDTLPGNVIKMIFSATLTTNTEKLNGLNLYKPKLFLKQTDKLYQLPNKLNEFNINIPTAKSVYKPLILLYSICQFMAHSPIAAKILIFVKSNESSIRLSKLLQLICESRSQSSVLKNLQNLAVSINSVNSNNSKAENKKIVANFSHHSESAGITILITTDIMSRGIDINDITQVINYDPPMSSQQYVHRVGRTARANELGSAYNLLVGRGERTFFDDLNKDLDRDGKSVQPLELDFTLLESDSELYTSSLESLKNYHNNTAQA.

Residues 1–129 (MFASRFDPSQ…GIEDEAASTH (129 aa)) form a disordered region. Positions 72–84 (ASEEDSSEVEEEE) are enriched in acidic residues. Residues S73, S77, and S78 each carry the phosphoserine modification. A compositionally biased stretch (polar residues) spans 88 to 103 (STHSTVLSRFKQTVSL). The segment covering 116-125 (KEDEGIEDEA) has biased composition (acidic residues). Positions 197–205 (TFPIQSIIL) match the Q motif motif. Positions 221-401 (RNFTRRIGDI…GLNLYKPKLF (181 aa)) constitute a Helicase ATP-binding domain. 234-241 (AATGSGKT) is an ATP binding site. The DEAD box motif lies at 341–344 (DEAD). The Helicase C-terminal domain maps to 437 to 603 (SICQFMAHSP…SVQPLELDFT (167 aa)).

It belongs to the DEAD box helicase family. DDX51/DBP6 subfamily. Associated with pre-ribosomal particles. Interacts with DBP9 and RSA3. Together with NOP8, URB1, URB2 and RSA3, forms an RNA-independent complex, which is required during early maturation of nascent 60S ribosomal subunits.

It is found in the nucleus. The protein resides in the nucleolus. It catalyses the reaction ATP + H2O = ADP + phosphate + H(+). In terms of biological role, ATP-binding RNA helicase involved in the biogenesis of 60S ribosomal subunits and is required for the normal formation of 25S and 5.8S rRNAs. This Saccharomyces cerevisiae (strain ATCC 204508 / S288c) (Baker's yeast) protein is ATP-dependent RNA helicase DBP6 (DBP6).